The following is an 89-amino-acid chain: Small ribosomal subunit protein uS19 (89 aa).

This sequence belongs to the universal ribosomal protein uS19 family.

In terms of biological role, protein S19 forms a complex with S13 that binds strongly to the 16S ribosomal RNA. This is Small ribosomal subunit protein uS19 from Phocaeicola vulgatus (strain ATCC 8482 / DSM 1447 / JCM 5826 / CCUG 4940 / NBRC 14291 / NCTC 11154) (Bacteroides vulgatus).